A 447-amino-acid polypeptide reads, in one-letter code: Probable glycine dehydrogenase (decarboxylating) subunit 1 (447 aa).

It belongs to the GcvP family. N-terminal subunit subfamily. The glycine cleavage system is composed of four proteins: P, T, L and H. In this organism, the P 'protein' is a heterodimer of two subunits.

It carries out the reaction N(6)-[(R)-lipoyl]-L-lysyl-[glycine-cleavage complex H protein] + glycine + H(+) = N(6)-[(R)-S(8)-aminomethyldihydrolipoyl]-L-lysyl-[glycine-cleavage complex H protein] + CO2. Its function is as follows. The glycine cleavage system catalyzes the degradation of glycine. The P protein binds the alpha-amino group of glycine through its pyridoxal phosphate cofactor; CO(2) is released and the remaining methylamine moiety is then transferred to the lipoamide cofactor of the H protein. In Metallosphaera sedula (strain ATCC 51363 / DSM 5348 / JCM 9185 / NBRC 15509 / TH2), this protein is Probable glycine dehydrogenase (decarboxylating) subunit 1.